Reading from the N-terminus, the 85-residue chain is Neurtoxin 10 (85 aa).

A signal peptide spans 1–23; it reads MKFCVAVSLLIIASMAGVISVSG. Residues 24–85 form the LCN-type CS-alpha/beta domain; that stretch reads YDVYPRDYAE…NFLSVIWKHC (62 aa). Intrachain disulfides connect Cys-38/Cys-60, Cys-46/Cys-65, and Cys-50/Cys-67.

The protein belongs to the long (3 C-C) scorpion toxin superfamily. As to expression, expressed by the venom gland.

It localises to the secreted. The polypeptide is Neurtoxin 10 (Lychas mucronatus (Chinese swimming scorpion)).